Here is a 107-residue protein sequence, read N- to C-terminus: MTEQKQQKKWHEKRKHLVGVVVSDKMDKTVVVKVDRKVPHPIYGKHIIKSKKYHAHDEHNECRVGDIVMIRETRPLSKTKRWVVVKILQRARRPEEEIQKQQEGQEQ.

Belongs to the universal ribosomal protein uS17 family. Part of the 30S ribosomal subunit.

Functionally, one of the primary rRNA binding proteins, it binds specifically to the 5'-end of 16S ribosomal RNA. The polypeptide is Small ribosomal subunit protein uS17 (Aquifex aeolicus (strain VF5)).